Here is a 321-residue protein sequence, read N- to C-terminus: Probable pectate lyase A (321 aa).

Residues 1–18 (MKFVATLIACGLSGLALA) form the signal peptide. Asparagine 93 is a glycosylation site (N-linked (GlcNAc...) asparagine). Residues aspartate 134, aspartate 163, and aspartate 167 each coordinate Ca(2+). Arginine 220 is a catalytic residue. Asparagine 238 is a glycosylation site (N-linked (GlcNAc...) asparagine).

This sequence belongs to the polysaccharide lyase 1 family. Requires Ca(2+) as cofactor.

It localises to the secreted. It catalyses the reaction Eliminative cleavage of (1-&gt;4)-alpha-D-galacturonan to give oligosaccharides with 4-deoxy-alpha-D-galact-4-enuronosyl groups at their non-reducing ends.. Functionally, pectinolytic enzyme consist of four classes of enzymes: pectin lyase, polygalacturonase, pectin methylesterase and rhamnogalacturonase. Among pectinolytic enzymes, pectin lyase is the most important in depolymerization of pectin, since it cleaves internal glycosidic bonds of highly methylated pectins. Favors pectate, the anion, over pectin, the methyl ester. This Aspergillus fumigatus (strain CBS 144.89 / FGSC A1163 / CEA10) (Neosartorya fumigata) protein is Probable pectate lyase A (plyA).